Reading from the N-terminus, the 126-residue chain is Protein ApaG (126 aa).

One can recognise an ApaG domain in the interval 2 to 126 (SDPRYQVDVS…FRLAVPGALH (125 aa)).

This chain is Protein ApaG, found in Pseudomonas fluorescens (strain Pf0-1).